Reading from the N-terminus, the 562-residue chain is MIIIAFSILDFKNKEAQNFDFKAGTNLIVSKGNTKGKSSLLKSMYYTLGFDVHQFPSNWNINFMYFQIEVLINNVKYNITRQKNIFRVSDVEVPLNVKEYSEWLQHKLEIKMQLANTHTKHLYEAYSSAVILPFYIDQDDSWDGGIYRNVTNTLNQYTRIPADIFKSVFNLSNYELLELQNSLTNYSKEKNTVVSTIKSLLNVLEDYRHENADVPTVSKIDKIALNKDIDRYLQMQNELNEQIVKYKMKLLNKQEMLDLQKQELSELEQLLKMNKKRYNSIETECQYCHSKLTKEQSLTRLDLSNNYFEISLLKEEIEKEVVKLTNEIIIFESQQNSIESKIDEIHRRIQNSKDLLTIDDYVKATAKKEASNELESLVDKQVLSKYNLEEKIKVLRREINKLKKEKESLREIIERDYTDLVFEIKKVLNDLNDTKLDLSELNLDELKFLEFKKISGSGMDKNKKFLAYYLIYFSLLRKYSSYIIPFCMDSFIKNEITGETAKKMFEAIEKYFFDTNQSFFSIVSENLKHLEFVDSYNKINVEGKLLVRDKYDEIALKFKFDS.

Its function is as follows. Component of antiviral defense system Lamassu type I, composed of LmuA and LmuB. Expression of Lamassu type I in B.subtilis (strain BEST7003) confers resistance to phages phi3T, SpBeta and SPR. May be an ATPase. This chain is Lamassu protein LmuB, found in Bacillus sp. (strain NCIM 5461 / CCTCC AB 2011126 / NIO-1130).